Here is a 485-residue protein sequence, read N- to C-terminus: GTPase Obg (485 aa).

The region spanning 1–159 (MKFVDEVRIF…LTLRLELKLL (159 aa)) is the Obg domain. The OBG-type G domain occupies 160 to 332 (ADVGLLGFPN…LMDSVAEVLF (173 aa)). GTP-binding positions include 166-173 (GFPNAGKS), 191-195 (FTTLV), 213-216 (DIPG), 284-287 (NKLD), and 313-315 (SCA). Positions 173 and 193 each coordinate Mg(2+). Composition is skewed to low complexity over residues 367–385 (AGAA…AAKK), 394–428 (RKAG…PVKK), 437–446 (RKSGTAPAKK), and 455–474 (RKSG…ATKR). A disordered region spans residues 367 to 485 (AGAAAATKSA…PARKSGGGRS (119 aa)).

It belongs to the TRAFAC class OBG-HflX-like GTPase superfamily. OBG GTPase family. In terms of assembly, monomer. The cofactor is Mg(2+).

Its subcellular location is the cytoplasm. Its function is as follows. An essential GTPase which binds GTP, GDP and possibly (p)ppGpp with moderate affinity, with high nucleotide exchange rates and a fairly low GTP hydrolysis rate. Plays a role in control of the cell cycle, stress response, ribosome biogenesis and in those bacteria that undergo differentiation, in morphogenesis control. This is GTPase Obg from Myxococcus xanthus (strain DK1622).